The following is a 352-amino-acid chain: DNA-directed RNA polymerase subunit alpha (352 aa).

Positions 1–236 (MTVNIRNWQE…DQLQVFVHFE (236 aa)) are alpha N-terminal domain (alpha-NTD). Positions 257-352 (SDVNQLNRFL…AKKLEQELLG (96 aa)) are alpha C-terminal domain (alpha-CTD).

It belongs to the RNA polymerase alpha chain family. In terms of assembly, homodimer. The RNAP catalytic core consists of 2 alpha, 1 beta, 1 beta' and 1 omega subunit. When a sigma factor is associated with the core the holoenzyme is formed, which can initiate transcription.

The enzyme catalyses RNA(n) + a ribonucleoside 5'-triphosphate = RNA(n+1) + diphosphate. DNA-dependent RNA polymerase catalyzes the transcription of DNA into RNA using the four ribonucleoside triphosphates as substrates. This Sphingopyxis alaskensis (strain DSM 13593 / LMG 18877 / RB2256) (Sphingomonas alaskensis) protein is DNA-directed RNA polymerase subunit alpha.